An 81-amino-acid polypeptide reads, in one-letter code: MSESEIFGKVKDIVAEQLSVDADKVTPEASFQNDLDADSLDVVEMVMALEEEFDIEIPDEAAEEILTVQAAVDFIAGKVKA.

Residues 4 to 79 (SEIFGKVKDI…AAVDFIAGKV (76 aa)) enclose the Carrier domain. At serine 39 the chain carries O-(pantetheine 4'-phosphoryl)serine.

It belongs to the acyl carrier protein (ACP) family. 4'-phosphopantetheine is transferred from CoA to a specific serine of apo-ACP by AcpS. This modification is essential for activity because fatty acids are bound in thioester linkage to the sulfhydryl of the prosthetic group.

It localises to the cytoplasm. The protein operates within lipid metabolism; fatty acid biosynthesis. Carrier of the growing fatty acid chain in fatty acid biosynthesis. The sequence is that of Acyl carrier protein from Acaryochloris marina (strain MBIC 11017).